Consider the following 239-residue polypeptide: Large ribosomal subunit protein eL32 (239 aa).

2 stretches are compositionally biased toward acidic residues: residues 1-12 (MSDENDTPEELA) and 67-91 (VEAD…ADVE). Disordered regions lie at residues 1 to 23 (MSDE…SKAE) and 64 to 178 (GLEV…HPSG). Positions 92–113 (TELRARGLTEKTPDLSEDEQRL) are enriched in basic and acidic residues. The segment covering 130–155 (YHKKKRTPTSWRRPKGTLSKQRRGIK) has biased composition (basic residues).

It belongs to the eukaryotic ribosomal protein eL32 family.

This chain is Large ribosomal subunit protein eL32 (rpl32e), found in Halobacterium salinarum (strain ATCC 700922 / JCM 11081 / NRC-1) (Halobacterium halobium).